The following is a 342-amino-acid chain: MASLINQAAWQPKARTRSLQVGPGPTPSPNEHEIVIKVAYAAVNPTDWKMQDTPYFELEYPFIWGTDVAGTIVQLGSEVTQFKVGQRVIGHCDSLLTRKVTNAGFQLYTTVREILVAEIPDSLPLANAAVLPLSVSTAASALYVQLDLPFPSLSPKSTGKRIVIWGGSSSVGSSAIQLAVASGLEVVATASQANHDLVRSLGASQVFDHRAPSVIDQMASVLQPGDYVVDCIGSPDTQAKCGELVGRIGGGTLPVMLWPQGGLPQNVRAVFVNGLDPGMVNLDVGNAVWRKFIPEALAAGKFQAKPDPRIVPGGLEKVQEGIDMLRQGVSAQKIVIEISRSE.

46 to 49 (TDWK) lines the NADP(+) pocket. Substrate is bound at residue 133–140 (LSVSTAAS). NADP(+) contacts are provided by residues 168–171 (SSSV), 191–194 (SQAN), 255–256 (VM), and 329–330 (VS).

The protein belongs to the zinc-containing alcohol dehydrogenase family. In terms of assembly, monomer.

Its pathway is secondary metabolite biosynthesis. Functionally, trans-enoyl reductase; part of the him gene cluster that mediates the biosynthesis of himeic acid A, a ubiquitin-activating enzyme (E1) inhibitor. First, himA, together with the trans-enoyl reductase himH, catalyzes the formation of apolyketide chain, which is then condensed with leucine by the NRPS activity of himA. Dieckmann cyclization and release from himA gives a tetramic acid intermediate as the product of himA PKS-NRPS. HimG then catalyzes alpha-oxidation of the tetramic acid ring, with a subsequent rearrangement to yield apyrone intermediate. Two terminal methyl groups of polyketide and amide side chains are oxidized to carboxylic acids by himC cytochrome P450 monooxygenase to form himeic acid A. Himeic acid A is further converted to himeic acid B and C during culture growth. No gene responsible for pyrone to pyridone conversion was found in the him gene cluster and himeic acid A is non-enzymatically converted to himeic acid C by the incorporation of an ammonium nitrogen atom in a pH5 buffer, and to himeic acid B at a conversion ratio of 50% during incubation in MeOH for 5 days. This Aspergillus japonicus protein is Trans-enoyl reductase himH.